We begin with the raw amino-acid sequence, 318 residues long: Acetyl-coenzyme A carboxylase carboxyl transferase subunit beta (318 aa).

The CoA carboxyltransferase N-terminal domain occupies 25 to 294 (LWSKCSECGT…AVKGELPAPA (270 aa)). Residues Cys-29, Cys-32, Cys-48, and Cys-51 each coordinate Zn(2+). A C4-type zinc finger spans residues 29–51 (CSECGTMLFHRELSDNLNVCTNC). The disordered stretch occupies residues 286-318 (VKGELPAPAPLESDAETALASDTDPNGAPPSKD).

This sequence belongs to the AccD/PCCB family. As to quaternary structure, acetyl-CoA carboxylase is a heterohexamer composed of biotin carboxyl carrier protein (AccB), biotin carboxylase (AccC) and two subunits each of ACCase subunit alpha (AccA) and ACCase subunit beta (AccD). Requires Zn(2+) as cofactor.

Its subcellular location is the cytoplasm. It catalyses the reaction N(6)-carboxybiotinyl-L-lysyl-[protein] + acetyl-CoA = N(6)-biotinyl-L-lysyl-[protein] + malonyl-CoA. The protein operates within lipid metabolism; malonyl-CoA biosynthesis; malonyl-CoA from acetyl-CoA: step 1/1. Its function is as follows. Component of the acetyl coenzyme A carboxylase (ACC) complex. Biotin carboxylase (BC) catalyzes the carboxylation of biotin on its carrier protein (BCCP) and then the CO(2) group is transferred by the transcarboxylase to acetyl-CoA to form malonyl-CoA. In Jannaschia sp. (strain CCS1), this protein is Acetyl-coenzyme A carboxylase carboxyl transferase subunit beta.